The primary structure comprises 374 residues: N5-carboxyaminoimidazole ribonucleotide synthase (374 aa).

ATP-binding positions include R108, K148, G153–Q159, E183–L186, E191, H214, and N266–E267. The ATP-grasp domain maps to K112–T296.

The protein belongs to the PurK/PurT family. Homodimer.

The enzyme catalyses 5-amino-1-(5-phospho-beta-D-ribosyl)imidazole + hydrogencarbonate + ATP = 5-carboxyamino-1-(5-phospho-D-ribosyl)imidazole + ADP + phosphate + 2 H(+). The protein operates within purine metabolism; IMP biosynthesis via de novo pathway; 5-amino-1-(5-phospho-D-ribosyl)imidazole-4-carboxylate from 5-amino-1-(5-phospho-D-ribosyl)imidazole (N5-CAIR route): step 1/2. Functionally, catalyzes the ATP-dependent conversion of 5-aminoimidazole ribonucleotide (AIR) and HCO(3)(-) to N5-carboxyaminoimidazole ribonucleotide (N5-CAIR). This is N5-carboxyaminoimidazole ribonucleotide synthase from Staphylococcus aureus (strain Mu50 / ATCC 700699).